Consider the following 2586-residue polypeptide: Highly reducing polyketide synthase FUM1 (2586 aa).

The 423-residue stretch at 29-451 (VLPVAIVGMG…GANAHCIIET (423 aa)) folds into the Ketosynthase family 3 (KS3) domain. Active-site for beta-ketoacyl synthase activity residues include Cys201, His336, and His374. A malonyl-CoA:ACP transacylase (MAT) domain region spans residues 609-928 (IFTGQGAQWV…TESLLKLAGE (320 aa)). The tract at residues 980–1111 (HELLGSRTLE…GQVRPGQDAH (132 aa)) is N-terminal hotdog fold. The segment at 980 to 1269 (HELLGSRTLE…LEDGKFSPLE (290 aa)) is dehydratase (DH) domain. One can recognise a PKS/mFAS DH domain in the interval 980–1274 (HELLGSRTLE…FSPLEMDLAE (295 aa)). The active-site Proton acceptor; for dehydratase activity is the His1012. The C-terminal hotdog fold stretch occupies residues 1125 to 1274 (QHYPRLVDNL…FSPLEMDLAE (150 aa)). Asp1186 serves as the catalytic Proton donor; for dehydratase activity. The interval 1450 to 1627 (DFFATAGHTR…GFSGVDSAIY (178 aa)) is methyltransferase (CMet) domain. Residues 1862–2172 (GLLQTLGWVP…KGVHLGKIVV (311 aa)) form an enoyl reductase (ER) (ER) domain region. The tract at residues 2197 to 2373 (ASYLLVGGLG…ASVLQIGLIE (177 aa)) is ketoreductase (KR) domain. In terms of domain architecture, Carrier spans 2486-2565 (PATVELVTNE…GLARLTVDGL (80 aa)). An O-(pantetheine 4'-phosphoryl)serine modification is found at Ser2524.

Its pathway is mycotoxin biosynthesis. Functionally, highly reducing polyketide synthase; part of the gene cluster that mediates the biosynthesis of fumonisins B1 (FB1), B2 (FB2), B3 (FB3), and B4 (FB4), which are carcinogenic mycotoxins. The biosynthesis starts with the FUM1-catalyzed carbon chain assembly from one molecule of acetyl-CoA, eight molecules of malonyl-CoA, and two molecules of methionine (in S-adenosyl form). The C18 polyketide chain is released from the enzyme by a nucleophilic attack of a carbanion, which is derived from R-carbon of alanine by decarboxylation, on the carbonyl carbon of polyketide acyl chain. This step is catalyzed by the pyridoxal 5'-phosphate-dependent aminoacyl transferase FUM8. The resultant 3-keto intermediate is then stereospecifically reduced to a 3-hydroxyl product by reductase FUM13. Subsequent oxidations at C-10 by the cytochrome P450 monooxygenase FUM2, C-14 and C-15 by FUM6, FUM12 or FUM15, tricarballylic esterification of the hydroxyl groups on C-14 and C-15 by acyltransferase FUM14, and C-5 hydroxylation by 2-keto-glutarate-dependent dioxygenase FUM3 furnish the biosynthesis of fumonisins. The tricarballylic moieties are most likely derived from the citric acid cycle, and their addition to the carbon backbone may involve FUM7, FUM10, FUM11 and FUM14. In Gibberella moniliformis (strain M3125 / FGSC 7600) (Maize ear and stalk rot fungus), this protein is Highly reducing polyketide synthase FUM1.